A 105-amino-acid polypeptide reads, in one-letter code: Phosphoribosyl-ATP pyrophosphatase (105 aa).

Belongs to the PRA-PH family.

It is found in the cytoplasm. The enzyme catalyses 1-(5-phospho-beta-D-ribosyl)-ATP + H2O = 1-(5-phospho-beta-D-ribosyl)-5'-AMP + diphosphate + H(+). It functions in the pathway amino-acid biosynthesis; L-histidine biosynthesis; L-histidine from 5-phospho-alpha-D-ribose 1-diphosphate: step 2/9. This is Phosphoribosyl-ATP pyrophosphatase from Ruegeria sp. (strain TM1040) (Silicibacter sp.).